A 253-amino-acid polypeptide reads, in one-letter code: 5'-nucleotidase SurE (253 aa).

4 residues coordinate a divalent metal cation: Asp-8, Asp-9, Ser-39, and Asn-96.

It belongs to the SurE nucleotidase family. The cofactor is a divalent metal cation.

The protein localises to the cytoplasm. The enzyme catalyses a ribonucleoside 5'-phosphate + H2O = a ribonucleoside + phosphate. Functionally, nucleotidase that shows phosphatase activity on nucleoside 5'-monophosphates. The sequence is that of 5'-nucleotidase SurE from Rhodopirellula baltica (strain DSM 10527 / NCIMB 13988 / SH1).